Reading from the N-terminus, the 859-residue chain is Leucine--tRNA ligase (859 aa).

The short motif at Pro43–His53 is the 'HIGH' region element. Residues Lys614–Ser618 carry the 'KMSKS' region motif. Lys617 provides a ligand contact to ATP.

It belongs to the class-I aminoacyl-tRNA synthetase family.

The protein localises to the cytoplasm. The enzyme catalyses tRNA(Leu) + L-leucine + ATP = L-leucyl-tRNA(Leu) + AMP + diphosphate. This Magnetococcus marinus (strain ATCC BAA-1437 / JCM 17883 / MC-1) protein is Leucine--tRNA ligase.